Here is a 320-residue protein sequence, read N- to C-terminus: Mechanosensory protein 3 (320 aa).

2 LIM zinc-binding domains span residues Cys-29–His-79 and Cys-89–His-145. A DNA-binding region (homeobox) is located at residues Arg-216–Lys-275.

Its subcellular location is the nucleus. Functionally, specifies differentiation of the set of six touch receptor neurons. Binds cooperatively as a heterodimer with unc-86 to sites in the mec-3 gene promoter. In Caenorhabditis remanei (Caenorhabditis vulgaris), this protein is Mechanosensory protein 3 (mec-3).